The chain runs to 202 residues: Large ribosomal subunit protein uL4 (202 aa).

A disordered region spans residues 47 to 67 (KTKAEVSGGGVKPWKQKGTGR).

The protein belongs to the universal ribosomal protein uL4 family. In terms of assembly, part of the 50S ribosomal subunit.

In terms of biological role, one of the primary rRNA binding proteins, this protein initially binds near the 5'-end of the 23S rRNA. It is important during the early stages of 50S assembly. It makes multiple contacts with different domains of the 23S rRNA in the assembled 50S subunit and ribosome. Its function is as follows. Forms part of the polypeptide exit tunnel. The polypeptide is Large ribosomal subunit protein uL4 (Dichelobacter nodosus (strain VCS1703A)).